An 80-amino-acid chain; its full sequence is MNAKAFLAIFMIALLITDRAEAGWWNAFKSIGKKLLKSKLAKDITKMAKQRAKEYVVKKLNGPPEEEVAAIDALMNSLDY.

An N-terminal signal peptide occupies residues 1–22 (MNAKAFLAIFMIALLITDRAEA).

Belongs to the non-disulfide-bridged peptide (NDBP) superfamily. Long chain multifunctional peptide (group 2) family. In terms of tissue distribution, expressed by the venom gland.

The protein localises to the secreted. The polypeptide is Venom protein HGE029 (Hoffmannihadrurus gertschi (Scorpion)).